The following is a 528-amino-acid chain: Probable rhamnogalacturonate lyase A (528 aa).

The signal sequence occupies residues 1 to 20 (MLSKATLLLFLPSWARVTYA). N46 is a glycosylation site (N-linked (GlcNAc...) asparagine). An intrachain disulfide couples C50 to C93. N148 carries N-linked (GlcNAc...) asparagine glycosylation. C184 and C193 are oxidised to a cystine. Residue N351 is glycosylated (N-linked (GlcNAc...) asparagine).

It belongs to the polysaccharide lyase 4 family.

It is found in the secreted. The enzyme catalyses Endotype eliminative cleavage of L-alpha-rhamnopyranosyl-(1-&gt;4)-alpha-D-galactopyranosyluronic acid bonds of rhamnogalacturonan I domains in ramified hairy regions of pectin leaving L-rhamnopyranose at the reducing end and 4-deoxy-4,5-unsaturated D-galactopyranosyluronic acid at the non-reducing end.. In terms of biological role, pectinolytic enzymes consist of four classes of enzymes: pectin lyase, polygalacturonase, pectin methylesterase and rhamnogalacturonase. Degrades the rhamnogalacturonan I (RG-I) backbone of pectin. In Aspergillus fumigatus (strain CBS 144.89 / FGSC A1163 / CEA10) (Neosartorya fumigata), this protein is Probable rhamnogalacturonate lyase A (rglA).